The following is a 314-amino-acid chain: Homoserine O-acetyltransferase (314 aa).

Residue C142 is the Acyl-thioester intermediate of the active site. Substrate-binding residues include K163 and S192. The active-site Proton acceptor is the H235. E237 is an active-site residue. R249 provides a ligand contact to substrate.

It belongs to the MetA family.

It localises to the cytoplasm. It carries out the reaction L-homoserine + acetyl-CoA = O-acetyl-L-homoserine + CoA. The protein operates within amino-acid biosynthesis; L-methionine biosynthesis via de novo pathway; O-acetyl-L-homoserine from L-homoserine: step 1/1. In terms of biological role, transfers an acetyl group from acetyl-CoA to L-homoserine, forming acetyl-L-homoserine. The sequence is that of Homoserine O-acetyltransferase from Streptococcus pneumoniae serotype 4 (strain ATCC BAA-334 / TIGR4).